The primary structure comprises 113 residues: U11-theraphotoxin-Hhn1a (113 aa).

Positions 1–21 (MNTVRVTFLLVFVLAVSLGQA) are cleaved as a signal peptide. Residues 22–74 (DKDENRMEMQEKTEQGKSYLDFAENLLLQKLEELEAKLLEEDSEESRNSRQKR) constitute a propeptide that is removed on maturation. A disordered region spans residues 61–83 (EEDSEESRNSRQKRCIGEGVPCD). Cystine bridges form between Cys75-Cys90, Cys82-Cys95, and Cys89-Cys110.

This sequence belongs to the neurotoxin 14 (magi-1) family. 01 (HNTX-16) subfamily. As to expression, expressed by the venom gland.

The protein localises to the secreted. Functionally, probable ion channel inhibitor. In Cyriopagopus hainanus (Chinese bird spider), this protein is U11-theraphotoxin-Hhn1a.